A 328-amino-acid chain; its full sequence is tRNA uridine(34) hydroxylase (328 aa).

In terms of domain architecture, Rhodanese spans 130-224; it reads LDEDTVVLDT…YGKDPEVQGE (95 aa). The Cysteine persulfide intermediate role is filled by C184.

It belongs to the TrhO family.

It catalyses the reaction uridine(34) in tRNA + AH2 + O2 = 5-hydroxyuridine(34) in tRNA + A + H2O. Catalyzes oxygen-dependent 5-hydroxyuridine (ho5U) modification at position 34 in tRNAs. This Streptococcus pyogenes serotype M12 (strain MGAS2096) protein is tRNA uridine(34) hydroxylase.